A 570-amino-acid chain; its full sequence is Spermatocyte protein spe-26 (570 aa).

6 Kelch repeats span residues 244–291 (VLII…IVDG), 293–338 (LYLF…SVVY), 341–393 (RIYV…VFEN), 395–440 (IYVS…NHGN), 442–487 (LLIV…SYKG), and 489–535 (LFSV…VAPN).

As to expression, testis, in both spermatogonial cells and spermatocytes.

The protein localises to the cytoplasm. The protein resides in the cytoskeleton. Functionally, may play a role in the spermatocyte cytoskeleton, possibly interacting with actin. The chain is Spermatocyte protein spe-26 (spe-26) from Caenorhabditis elegans.